The chain runs to 672 residues: GPI mannosyltransferase pigv-1 (672 aa).

The Cytoplasmic portion of the chain corresponds to 1 to 134 (MRRREPGRDV…TQRCLGFCFR (134 aa)). Basic and acidic residues predominate over residues 82-94 (REESDSSSSREDS). The tract at residues 82–115 (REESDSSSSREDSPLGSTETGESCSTTDDEESKE) is disordered. Positions 97–107 (GSTETGESCST) are enriched in low complexity. A helical transmembrane segment spans residues 135–155 (QLFFSRMWVFILQFIASYYAG). The Extracellular segment spans residues 156–239 (DRFRTDGFNL…NGMESVFGWT (84 aa)). The helical transmembrane segment at 240–260 (FPPWVTITLAAVFVNLFCFLL) threads the bilayer. The Cytoplasmic segment spans residues 261–277 (CGMTLYQVVLIMTRSVK). 2 helical membrane-spanning segments follow: residues 278 to 298 (ISLL…FSSA) and 299 to 319 (YSES…LFGL). At 320–345 (RGKGFWHRMLKGFTGTICFGLTFAVR) the chain is on the extracellular side. A helical membrane pass occupies residues 346 to 366 (SNGLLNFLYVAWIWCGTLLWD). Over 367-423 (EEMPIPDCHKLISTLAATKNERYKQEWQAKFWRFQQKRKQNRKVFRWTDPNFSRCVT) the chain is Cytoplasmic. The chain crosses the membrane as a helical span at residues 424–444 (LFIVIVCAISATLLFFTPYVF). At 445 to 520 (MTNFTADEFC…WSVKFFGYWK (76 aa)) the chain is on the extracellular side. Residues 521–541 (IKKIPCFLMMLPAAILTVLAI) form a helical membrane-spanning segment. The Cytoplasmic portion of the chain corresponds to 542-569 (KSSWNDVFLNKRWNNIWVLTARSDHSLP). A helical transmembrane segment spans residues 570–590 (MAIHSSVLLFVAIFYINSEVF). The Extracellular segment spans residues 591-592 (TR). Residues 593 to 613 (IIFSSSPFIYIYIATYIDKLT) traverse the membrane as a helical segment. The Cytoplasmic portion of the chain corresponds to 614–648 (QGTIAGNRLWQYFESPGILPFFVFRRVWQDGWRGK). Residues 649–669 (LLYIYILGYFVFGTMAHSAWL) traverse the membrane as a helical segment. At 670–672 (PFT) the chain is on the extracellular side.

Belongs to the PIGV family. In terms of tissue distribution, expressed in epithelial tissues including the epidermis, pharynx, intestine, rectum and excretory cell during embryogenesis.

The protein resides in the endoplasmic reticulum membrane. Its pathway is glycolipid biosynthesis; glycosylphosphatidylinositol-anchor biosynthesis. Its function is as follows. Alpha-1,6-mannosyltransferase involved in glycosylphosphatidylinositol-anchor biosynthesis. Transfers the second mannose to the glycosylphosphatidylinositol during GPI precursor assembly. Required for maintenance of epithelial integrity during embryogenesis. The polypeptide is GPI mannosyltransferase pigv-1 (Caenorhabditis elegans).